We begin with the raw amino-acid sequence, 141 residues long: Protein X (141 aa).

The disordered stretch occupies residues 25–52 (SSGPSFPRPAAGSAASSASSPSPSDDSD). Positions 68–113 (PCCLVFTCADLRTMDSTVNFVSWHANRQLGMPSKDLWTPYIKDQLL) are mitochondrial targeting sequence.

It belongs to the orthohepadnavirus protein X family. In terms of assembly, may form homodimer. May interact with host CEBPA, CFLAR, CREB1, DDB1, E4F1, HBXIP, HSPD1/HSP60, NFKBIA, POLR2E and SMAD4. Interacts with host SMC5-SMC6 complex and induces its degradation. Interacts with host TRPC4AP; leading to prevent ubiquitination of TRPC4AP. Interacts with host PLSCR1; this interaction promotes ubiquitination and degradation of HBx and impairs HBx-mediated cell proliferation. In terms of processing, a fraction may be phosphorylated in insect cells and HepG2 cells, a human hepatoblastoma cell line. Phosphorylated in vitro by host protein kinase C or mitogen-activated protein kinase. N-acetylated in insect cells.

It localises to the host cytoplasm. The protein resides in the host nucleus. It is found in the host mitochondrion. Multifunctional protein that plays a role in silencing host antiviral defenses and promoting viral transcription. Does not seem to be essential for HBV infection. May be directly involved in development of cirrhosis and liver cancer (hepatocellular carcinoma). Most of cytosolic activities involve modulation of cytosolic calcium. The effect on apoptosis is controversial depending on the cell types in which the studies have been conducted. May induce apoptosis by localizing in mitochondria and causing loss of mitochondrial membrane potential. May also modulate apoptosis by binding host CFLAR, a key regulator of the death-inducing signaling complex (DISC). Promotes viral transcription by using the host E3 ubiquitin ligase DDB1 to target the SMC5-SMC6 complex to proteasomal degradation. This host complex would otherwise bind to viral episomal DNA, and prevents its transcription. Moderately stimulates transcription of many different viral and cellular transcription elements. Promoters and enhancers stimulated by HBx contain DNA binding sites for NF-kappa-B, AP-1, AP-2, c-EBP, ATF/CREB, or the calcium-activated factor NF-AT. This Woodchuck hepatitis B virus (isolate 2) (WHV) protein is Protein X.